Consider the following 880-residue polypeptide: Alanine--tRNA ligase (880 aa).

Zn(2+)-binding residues include histidine 566, histidine 570, cysteine 668, and histidine 672.

Belongs to the class-II aminoacyl-tRNA synthetase family. It depends on Zn(2+) as a cofactor.

The protein resides in the cytoplasm. It catalyses the reaction tRNA(Ala) + L-alanine + ATP = L-alanyl-tRNA(Ala) + AMP + diphosphate. In terms of biological role, catalyzes the attachment of alanine to tRNA(Ala) in a two-step reaction: alanine is first activated by ATP to form Ala-AMP and then transferred to the acceptor end of tRNA(Ala). Also edits incorrectly charged Ser-tRNA(Ala) and Gly-tRNA(Ala) via its editing domain. This Nostoc punctiforme (strain ATCC 29133 / PCC 73102) protein is Alanine--tRNA ligase.